A 491-amino-acid chain; its full sequence is Glycylpeptide N-tetradecanoyltransferase (491 aa).

Tetradecanoyl-CoA is bound at residue 45 to 48; the sequence is HKFW. The segment at 53 to 79 is disordered; the sequence is VPQITGSGASAPMEEGPIDDPKTPADV. Residues 182–184 and 190–194 contribute to the tetradecanoyl-CoA site; these read LCV and SKRLA. Leu-491 acts as the Proton acceptor; via carboxylate in catalysis.

The protein belongs to the NMT family. Monomer.

Its subcellular location is the cytoplasm. It carries out the reaction N-terminal glycyl-[protein] + tetradecanoyl-CoA = N-tetradecanoylglycyl-[protein] + CoA + H(+). Functionally, adds a myristoyl group to the N-terminal glycine residue of certain cellular proteins. In Cryptococcus neoformans (Filobasidiella neoformans), this protein is Glycylpeptide N-tetradecanoyltransferase.